A 32-amino-acid polypeptide reads, in one-letter code: MLDPTGTYRRPRDTQDSRQKRRQDCLDPTGQY.

A disordered region spans residues 1 to 32; it reads MLDPTGTYRRPRDTQDSRQKRRQDCLDPTGQY. Residues 2–8 form repeat 1; sequence LDPTGTY. The 2 X 7 AA repeats of L-D-P-T-G-[TQ]-Y stretch occupies residues 2–32; that stretch reads LDPTGTYRRPRDTQDSRQKRRQDCLDPTGQY. The segment covering 10 to 25 has biased composition (basic and acidic residues); it reads RPRDTQDSRQKRRQDC. The stretch at 26–32 is repeat 2; that stretch reads LDPTGQY.

The protein localises to the cytoplasm. It is found in the nucleus. Its function is as follows. One of four peptides (tal-1A, tal-2A, tal-3A and tal-AA) produced from a polycistronic gene that function redundantly in several developmental processes. Required in early stages of leg development for the intercalation of the tarsal segments during the mid-third instar stage and later for tarsal joint formation. Promotes the post-translational modification of ovo isoform B (svb) into its active form which in turn initiates trichome development and promotes tarsal joint development. This is likely due to recruitment of the E3 ubiquitin-protein ligase Ubr3 to svb for ubiquitination of its N-terminus, converting svb into a transcriptional activator. Also enhances interaction of Ubr3 with Diap1. Required for correct wing and leg formation through its regulation of several genes including those in the Notch signaling pathway. Essential for denticle formation and may have a role in the developmental timing of trichome differentiation. Essential for the development of taenidial folds in the trachea. The protein is Peptide tarsal-less AA of Drosophila melanogaster (Fruit fly).